A 146-amino-acid chain; its full sequence is Pseudoazurin (146 aa).

A signal peptide spans 1–23 (MRNIAIKFAAAGILAMLAAPALA). One can recognise a Plastocyanin-like domain in the interval 28–116 (VHMLNKGAEG…MGMIALIAVG (89 aa)). Residues His63, Cys101, His104, and Met109 each contribute to the Cu cation site.

Requires Cu cation as cofactor.

It localises to the periplasm. In terms of biological role, this soluble electron transfer copper protein is required for the inactivation of copper-containing nitrite reductase in the presence of oxygen. Serves as a direct electron donor to the nitrite reductase. This Alcaligenes faecalis protein is Pseudoazurin.